The chain runs to 368 residues: Trans-enoyl reductase thnE (368 aa).

Residue 53 to 56 (VDVK) coordinates NADP(+). 140 to 147 (LATATAAY) provides a ligand contact to substrate. NADP(+) contacts are provided by residues 179-182 (STAT), 202-205 (SPSN), Tyr-220, and 267-268 (VE). Substrate is bound at residue 289 to 293 (VMTVW). 358 to 359 (PS) contributes to the NADP(+) binding site.

This sequence belongs to the zinc-containing alcohol dehydrogenase family. Monomer.

The catalysed reaction is malate + 6 malonyl-CoA + acetyl-CoA + 2 AH2 + 2 S-adenosyl-L-methionine + 5 NADPH + 9 H(+) = trihazone A + 2 A + 2 S-adenosyl-L-homocysteine + 6 CO2 + 5 NADP(+) + 7 CoA + 6 H2O. It participates in secondary metabolite biosynthesis. Its function is as follows. Trans-enoyl reductase; part of the gene cluster that produces the tetronate natural products trihazones. The PKS-NRPS synthetase thnA with the help of the trans-enoyl reductase thnE are responsible for the synthesis of the carboxylmethyl containing trihazone A. The PKS portion of thnA synthesizes beta-keto-triene chain from one acetyl-CoA and 6 equivalents of malonyl-CoA, in collaboration with thnE, which selectively reduces the enoyl intermediate during the first and fourth iteration of the PKS. The NRPS domain selects and activates malate, of which the alpha-hydroxyl group attacks the completed polyketide acyl-S-ACP chain to form the ester product. Intramolecular Dieckmann cyclization catalyzed by the terminal reductase domain releases the product as trihazone A from the PKS-NPRS. The pathway begins with the formation of trihazone A by the hybrid PKS-NRPS synthetase thnA and the trans-enoyl reductase thnE. Trihazone A is further decarboxylated by the 2-oxoglutarate-dependent dioxygenase thnC to produce trihazone D. The function of the FAD-dependent monooxygenase thnD has still to be identified. The polypeptide is Trans-enoyl reductase thnE (Trichoderma harzianum (Hypocrea lixii)).